Here is a 69-residue protein sequence, read N- to C-terminus: Parvalbumin beta 3 (69 aa).

Position 1 is an N-acetylalanine (Ala1). Residues 24–59 enclose the EF-hand domain; sequence FNYKTFFKFFAIIDQDHSGFIEEEELKLFLQTFSAG. Asp37, Asp39, Ser41, Phe43, Glu45, and Glu48 together coordinate Ca(2+).

It belongs to the parvalbumin family.

In muscle, parvalbumin is thought to be involved in relaxation after contraction. It binds two calcium ions. In Merluccius polli (Benguela hake), this protein is Parvalbumin beta 3.